The chain runs to 718 residues: Ribonuclease J (718 aa).

The segment at 1-130 (MNDSRNRGRK…RGNRGGGRRN (130 aa)) is disordered. Composition is skewed to low complexity over residues 55 to 91 (AAQG…NNNR) and 100 to 118 (SGNA…NRQG). Zn(2+)-binding residues include H220, H222, D224, H225, H287, and D309. 510-514 (HTSGH) contributes to the substrate binding site. Zn(2+) is bound at residue H536.

This sequence belongs to the metallo-beta-lactamase superfamily. RNA-metabolizing metallo-beta-lactamase-like family. Bacterial RNase J subfamily. As to quaternary structure, homodimer, may be a subunit of the RNA degradosome. The cofactor is Zn(2+).

It localises to the cytoplasm. In terms of biological role, an RNase that has 5'-3' exonuclease and possibly endoonuclease activity. Involved in maturation of rRNA and in some organisms also mRNA maturation and/or decay. This Corynebacterium glutamicum (strain ATCC 13032 / DSM 20300 / JCM 1318 / BCRC 11384 / CCUG 27702 / LMG 3730 / NBRC 12168 / NCIMB 10025 / NRRL B-2784 / 534) protein is Ribonuclease J.